The chain runs to 398 residues: 4-hydroxy-3-methylbut-2-enyl diphosphate reductase (398 aa).

C66 is a [4Fe-4S] cluster binding site. H96 is a binding site for (2E)-4-hydroxy-3-methylbut-2-enyl diphosphate. H96 is a dimethylallyl diphosphate binding site. Position 96 (H96) interacts with isopentenyl diphosphate. Position 157 (C157) interacts with [4Fe-4S] cluster. Residue H185 coordinates (2E)-4-hydroxy-3-methylbut-2-enyl diphosphate. Residue H185 participates in dimethylallyl diphosphate binding. Residue H185 coordinates isopentenyl diphosphate. Catalysis depends on E187, which acts as the Proton donor. T250 contacts (2E)-4-hydroxy-3-methylbut-2-enyl diphosphate. C288 provides a ligand contact to [4Fe-4S] cluster. Positions 317, 318, 319, and 379 each coordinate (2E)-4-hydroxy-3-methylbut-2-enyl diphosphate. Dimethylallyl diphosphate-binding residues include S317, S318, N319, and S379. Residues S317, S318, N319, and S379 each coordinate isopentenyl diphosphate.

Belongs to the IspH family. The cofactor is [4Fe-4S] cluster.

The catalysed reaction is isopentenyl diphosphate + 2 oxidized [2Fe-2S]-[ferredoxin] + H2O = (2E)-4-hydroxy-3-methylbut-2-enyl diphosphate + 2 reduced [2Fe-2S]-[ferredoxin] + 2 H(+). It catalyses the reaction dimethylallyl diphosphate + 2 oxidized [2Fe-2S]-[ferredoxin] + H2O = (2E)-4-hydroxy-3-methylbut-2-enyl diphosphate + 2 reduced [2Fe-2S]-[ferredoxin] + 2 H(+). It functions in the pathway isoprenoid biosynthesis; dimethylallyl diphosphate biosynthesis; dimethylallyl diphosphate from (2E)-4-hydroxy-3-methylbutenyl diphosphate: step 1/1. It participates in isoprenoid biosynthesis; isopentenyl diphosphate biosynthesis via DXP pathway; isopentenyl diphosphate from 1-deoxy-D-xylulose 5-phosphate: step 6/6. Its function is as follows. Catalyzes the conversion of 1-hydroxy-2-methyl-2-(E)-butenyl 4-diphosphate (HMBPP) into a mixture of isopentenyl diphosphate (IPP) and dimethylallyl diphosphate (DMAPP). Acts in the terminal step of the DOXP/MEP pathway for isoprenoid precursor biosynthesis. The polypeptide is 4-hydroxy-3-methylbut-2-enyl diphosphate reductase (Synechococcus sp. (strain ATCC 27144 / PCC 6301 / SAUG 1402/1) (Anacystis nidulans)).